The sequence spans 228 residues: Transcription termination/antitermination protein NusG (228 aa).

It belongs to the NusG family.

In terms of biological role, participates in transcription elongation, termination and antitermination. The polypeptide is Transcription termination/antitermination protein NusG (Mycobacterium leprae (strain TN)).